Consider the following 82-residue polypeptide: Penaeidin-3d (82 aa).

The signal sequence occupies residues 1-19; sequence MRLVVCLVFLASFALVCQG. Position 20 is a pyrrolidone carboxylic acid (glutamine 20). 3 disulfides stabilise this stretch: cysteine 51–cysteine 66, cysteine 55–cysteine 73, and cysteine 67–cysteine 74. Serine 81 is modified (serine amide).

It belongs to the penaeidin family.

Its subcellular location is the cytoplasmic granule. In terms of biological role, antibacterial and antifungal activity. Presents chitin-binding activity. The sequence is that of Penaeidin-3d from Penaeus vannamei (Whiteleg shrimp).